A 30-amino-acid polypeptide reads, in one-letter code: Kalata-B14 (30 aa).

The segment at residues 1 to 30 (GLPVCGESCFGGTCNTPGCACDPWPVCTRD) is a cross-link (cyclopeptide (Gly-Asp)). Intrachain disulfides connect Cys-5/Cys-19, Cys-9/Cys-21, and Cys-14/Cys-27.

In terms of processing, this is a cyclic peptide.

Its function is as follows. Probably participates in a plant defense mechanism. In Oldenlandia affinis, this protein is Kalata-B14.